Reading from the N-terminus, the 120-residue chain is Holo-[acyl-carrier-protein] synthase (120 aa).

Residues D6 and E55 each coordinate Mg(2+).

It belongs to the P-Pant transferase superfamily. AcpS family. Requires Mg(2+) as cofactor.

The protein resides in the cytoplasm. It carries out the reaction apo-[ACP] + CoA = holo-[ACP] + adenosine 3',5'-bisphosphate + H(+). Functionally, transfers the 4'-phosphopantetheine moiety from coenzyme A to a Ser of acyl-carrier-protein. The sequence is that of Holo-[acyl-carrier-protein] synthase from Pelodictyon phaeoclathratiforme (strain DSM 5477 / BU-1).